An 882-amino-acid polypeptide reads, in one-letter code: Alanine--tRNA ligase (882 aa).

H570, H574, C672, and H676 together coordinate Zn(2+).

This sequence belongs to the class-II aminoacyl-tRNA synthetase family. Requires Zn(2+) as cofactor.

The protein localises to the cytoplasm. It carries out the reaction tRNA(Ala) + L-alanine + ATP = L-alanyl-tRNA(Ala) + AMP + diphosphate. Catalyzes the attachment of alanine to tRNA(Ala) in a two-step reaction: alanine is first activated by ATP to form Ala-AMP and then transferred to the acceptor end of tRNA(Ala). Also edits incorrectly charged Ser-tRNA(Ala) and Gly-tRNA(Ala) via its editing domain. The chain is Alanine--tRNA ligase from Xanthomonas oryzae pv. oryzae (strain MAFF 311018).